The chain runs to 179 residues: Ribosome-recycling factor (179 aa).

Belongs to the RRF family.

It is found in the cytoplasm. Responsible for the release of ribosomes from messenger RNA at the termination of protein biosynthesis. May increase the efficiency of translation by recycling ribosomes from one round of translation to another. The protein is Ribosome-recycling factor of Chlamydia trachomatis serovar A (strain ATCC VR-571B / DSM 19440 / HAR-13).